A 362-amino-acid polypeptide reads, in one-letter code: Acetylajmalan esterase 2 (362 aa).

The N-terminal stretch at 1-23 (MGFAARPFHIVFSLFVLAGATQA) is a signal peptide. The active-site Nucleophile is the serine 38. N-linked (GlcNAc...) asparagine glycans are attached at residues asparagine 100, asparagine 118, asparagine 151, and asparagine 202. Active-site residues include aspartate 335 and histidine 338.

It belongs to the 'GDSL' lipolytic enzyme family. Confined to roots.

It catalyses the reaction 17-O-acetylnorajmaline + H2O = norajmaline + acetate + H(+). The enzyme catalyses 17-O-acetylajmaline + H2O = ajmaline + acetate + H(+). Its pathway is alkaloid biosynthesis; ajmaline biosynthesis. In terms of biological role, acetylesterase involved in the biosynthesis of ajmaline-type monoterpenoid indole alkaloids (MIAs) natural products, important plant-derived pharmaceuticals used in the therapy of heart disorders. Deacetylates 17-O-acetylnorajmaline to produce norajmaline. May also catalyze the conversion of 17-O-acetylajmaline to ajmaline. This is Acetylajmalan esterase 2 from Rauvolfia serpentina (Serpentine wood).